We begin with the raw amino-acid sequence, 1279 residues long: ATP-dependent helicase/nuclease subunit A (1279 aa).

The UvrD-like helicase ATP-binding domain maps to threonine 4–arginine 499. Alanine 25–threonine 32 lines the ATP pocket. One can recognise a UvrD-like helicase C-terminal domain in the interval glutamate 526–glycine 853.

This sequence belongs to the helicase family. AddA subfamily. Heterodimer of AddA and AddB/RexB. The cofactor is Mg(2+).

It carries out the reaction Couples ATP hydrolysis with the unwinding of duplex DNA by translocating in the 3'-5' direction.. The enzyme catalyses ATP + H2O = ADP + phosphate + H(+). In terms of biological role, the heterodimer acts as both an ATP-dependent DNA helicase and an ATP-dependent, dual-direction single-stranded exonuclease. Recognizes the chi site generating a DNA molecule suitable for the initiation of homologous recombination. The AddA nuclease domain is required for chi fragment generation; this subunit has the helicase and 3' -&gt; 5' nuclease activities. In Clostridium botulinum (strain Okra / Type B1), this protein is ATP-dependent helicase/nuclease subunit A.